The primary structure comprises 92 residues: Phospholemman (92 aa).

A signal peptide spans 1-20 (MAPLHHILVLCVGFLTTATA). Over 21–35 (EAPQEHDPFTYDYQS) the chain is Extracellular. A helical transmembrane segment spans residues 36–56 (LRIGGLIIAGILFILGILIVL). The Cytoplasmic segment spans residues 57–92 (SRRCRCKFNQQQRTGEPDEEEGTFRSSIRRLSTRRR). The S-palmitoyl cysteine moiety is linked to residue Cys-60. Cys-62 is subject to S-glutathionyl cysteine; alternate. Cys-62 carries S-palmitoyl cysteine; alternate lipidation. The segment at 65 to 92 (NQQQRTGEPDEEEGTFRSSIRRLSTRRR) is disordered. Residue Thr-79 is modified to Phosphothreonine. Ser-82 carries the phosphoserine modification. Ser-83 and Ser-88 each carry phosphoserine; by PKA and PKC. The segment covering 83–92 (SIRRLSTRRR) has biased composition (basic residues). Thr-89 carries the phosphothreonine; by PKC modification.

It belongs to the FXYD family. In terms of assembly, homotetramer. Monomer. Regulatory subunit of the sodium/potassium-transporting ATPase (NKA) which is composed of a catalytic alpha subunit, a non-catalytic beta subunit and an additional regulatory subunit. The monomeric form associates with NKA while the oligomeric form does not. Interacts with the catalytic alpha-1 subunit ATP1A1. Also interacts with the catalytic alpha-2 and alpha-3 subunits ATP1A2 and ATP1A3. Very little interaction with the alpha subunits ATP1A1, ATP1A2 or ATP1A3 when phosphorylated at Ser-83. Interacts with non-catalytic beta-1 subunit ATP1B1. Oxidative stress decreases interaction with ATP1A1 but increases interaction with ATP1B1. Major plasma membrane substrate for cAMP-dependent protein kinase (PKA) and protein kinase C (PKC) in several different tissues. Phosphorylated in response to insulin and adrenergic stimulation. Phosphorylation at Ser-88 stimulates sodium/potassium-transporting ATPase activity while the unphosphorylated form inhibits sodium/potassium-transporting ATPase activity. Phosphorylation increases tetramerization, decreases binding to ATP1A1 and reduces inhibition of ATP1A1 activity. Phosphorylation at Ser-83 leads to greatly reduced interaction with ATP1A1, ATP1A2 and ATP1A3. May be phosphorylated by DMPK. Post-translationally, palmitoylation increases half-life and stability and is enhanced upon phosphorylation at Ser-88 by PKA. As to expression, present in heart, esophagus, stomach, aorta, skeletal muscle, smooth muscle, and liver but absent from brain and kidney.

It is found in the cell membrane. The protein localises to the sarcolemma. Its subcellular location is the apical cell membrane. The protein resides in the membrane. It localises to the caveola. It is found in the T-tubule. Its function is as follows. Associates with and regulates the activity of the sodium/potassium-transporting ATPase (NKA) which transports Na(+) out of the cell and K(+) into the cell. Inhibits NKA activity in its unphosphorylated state and stimulates activity when phosphorylated. Reduces glutathionylation of the NKA beta-1 subunit ATP1B1, thus reversing glutathionylation-mediated inhibition of ATP1B1. Contributes to female sexual development by maintaining the excitability of neurons which secrete gonadotropin-releasing hormone. In Canis lupus familiaris (Dog), this protein is Phospholemman.